The chain runs to 959 residues: E3 ubiquitin-protein ligase arkadia-B (959 aa).

Polar residues predominate over residues C51–T66. Disordered stretches follow at residues C51–L171, R189–R212, and L225–M271. Low complexity predominate over residues S112–D131. Residues P142–R156 show a composition bias toward polar residues. The span at S228–S246 shows a compositional bias: low complexity. The segment covering T256–P267 has biased composition (polar residues). The SUMO interaction motif 1 (SIM) motif lies at V275 to E279. The short motif at E300–V306 is the SUMO interaction motif 2 (SIM) element. A disordered region spans residues H318–V341. A compositionally biased stretch (polar residues) spans W323–T332. The SUMO interaction motif 3 (SIM) motif lies at V355–T359. Over residues T370–M397 the composition is skewed to polar residues. 4 disordered regions span residues T370 to G399, H475 to D499, P615 to V649, and P661 to A680. Positions H475 to S487 are enriched in basic residues. A compositionally biased stretch (polar residues) spans H620–S632. Residues Q633 to M646 are compositionally biased toward pro residues. A ubiquitin binding region spans residues Y872–H874. The Zn(2+) site is built by C907 and C910. An RING-type; atypical zinc finger spans residues C907–R948. The ubiquitin binding stretch occupies residues R922–M926. Positions 930 and 933 each coordinate Zn(2+).

This sequence belongs to the Arkadia family. In terms of assembly, monomer.

It is found in the nucleus. It localises to the cytoplasm. The protein localises to the PML body. It catalyses the reaction S-ubiquitinyl-[E2 ubiquitin-conjugating enzyme]-L-cysteine + [acceptor protein]-L-lysine = [E2 ubiquitin-conjugating enzyme]-L-cysteine + N(6)-ubiquitinyl-[acceptor protein]-L-lysine.. It participates in protein modification; protein ubiquitination. With respect to regulation, binds free ubiquitin non-covalently via its RING-type zinc finger. Ubiquitin-binding leads to enhance the E3 ubiquitin-protein ligase activity by stabilizing the ubiquitin-conjugating enzyme E2 (donor ubiquitin) in the 'closed' conformation and activating ubiquitin transfer. Its function is as follows. E3 ubiquitin-protein ligase required for mesoderm patterning during embryonic development. Acts as an enhancer of the transcriptional responses of the smad2/smad3 effectors, which are activated downstream of BMP. Acts by mediating ubiquitination and degradation of SMAD inhibitors such as smad7, inducing their proteasomal degradation and thereby enhancing the transcriptional activity of TGF-beta and BMP. Specifically binds polysumoylated chains via SUMO interaction motifs (SIMs) and mediates ubiquitination of sumoylated substrates. The regulation of the BMP-SMAD signaling is however independent of sumoylation and is not dependent of SUMO interaction motifs (SIMs). The protein is E3 ubiquitin-protein ligase arkadia-B (rnf111-b) of Xenopus laevis (African clawed frog).